Consider the following 728-residue polypeptide: Phosphoribosylformylglycinamidine synthase subunit PurL (728 aa).

The active site involves His42. Residues Tyr45 and Lys84 each coordinate ATP. Glu86 contributes to the Mg(2+) binding site. Substrate contacts are provided by residues 87-90 (SHNH) and Arg109. Residue His88 is the Proton acceptor of the active site. A Mg(2+)-binding site is contributed by Asp110. Gln237 is a substrate binding site. Asp265 contacts Mg(2+). Position 309–311 (309–311 (ESQ)) interacts with substrate. Residues Asp491 and Gly528 each contribute to the ATP site. Position 529 (Asn529) interacts with Mg(2+). Position 531 (Ser531) interacts with substrate.

This sequence belongs to the FGAMS family. As to quaternary structure, monomer. Part of the FGAM synthase complex composed of 1 PurL, 1 PurQ and 2 PurS subunits.

It localises to the cytoplasm. The enzyme catalyses N(2)-formyl-N(1)-(5-phospho-beta-D-ribosyl)glycinamide + L-glutamine + ATP + H2O = 2-formamido-N(1)-(5-O-phospho-beta-D-ribosyl)acetamidine + L-glutamate + ADP + phosphate + H(+). Its pathway is purine metabolism; IMP biosynthesis via de novo pathway; 5-amino-1-(5-phospho-D-ribosyl)imidazole from N(2)-formyl-N(1)-(5-phospho-D-ribosyl)glycinamide: step 1/2. In terms of biological role, part of the phosphoribosylformylglycinamidine synthase complex involved in the purines biosynthetic pathway. Catalyzes the ATP-dependent conversion of formylglycinamide ribonucleotide (FGAR) and glutamine to yield formylglycinamidine ribonucleotide (FGAM) and glutamate. The FGAM synthase complex is composed of three subunits. PurQ produces an ammonia molecule by converting glutamine to glutamate. PurL transfers the ammonia molecule to FGAR to form FGAM in an ATP-dependent manner. PurS interacts with PurQ and PurL and is thought to assist in the transfer of the ammonia molecule from PurQ to PurL. This is Phosphoribosylformylglycinamidine synthase subunit PurL from Campylobacter jejuni subsp. jejuni serotype O:6 (strain 81116 / NCTC 11828).